The following is a 149-amino-acid chain: MRVVIQRVSKASVTIEENVVGKVGPGFMLLVAFNDEDTDADLDFAVRKIVNMRIFEDEQAKMNLSINDVKGAILSVSQFTLFASTKKGNRPSFTKSGNPELASKLYDQFNAKLRATGIEVQTGQFGADMQVELVNDGPVTIVLDTQNKE.

The short motif at 137-138 is the Gly-cisPro motif, important for rejection of L-amino acids element; that stretch reads GP.

This sequence belongs to the DTD family. As to quaternary structure, homodimer.

Its subcellular location is the cytoplasm. The enzyme catalyses glycyl-tRNA(Ala) + H2O = tRNA(Ala) + glycine + H(+). The catalysed reaction is a D-aminoacyl-tRNA + H2O = a tRNA + a D-alpha-amino acid + H(+). Functionally, an aminoacyl-tRNA editing enzyme that deacylates mischarged D-aminoacyl-tRNAs. Also deacylates mischarged glycyl-tRNA(Ala), protecting cells against glycine mischarging by AlaRS. Acts via tRNA-based rather than protein-based catalysis; rejects L-amino acids rather than detecting D-amino acids in the active site. By recycling D-aminoacyl-tRNA to D-amino acids and free tRNA molecules, this enzyme counteracts the toxicity associated with the formation of D-aminoacyl-tRNA entities in vivo and helps enforce protein L-homochirality. This is D-aminoacyl-tRNA deacylase from Pediococcus pentosaceus (strain ATCC 25745 / CCUG 21536 / LMG 10740 / 183-1w).